The sequence spans 442 residues: 3-phosphoshikimate 1-carboxyvinyltransferase (442 aa).

3-phosphoshikimate is bound by residues lysine 25, serine 26, and arginine 30. Lysine 25 lines the phosphoenolpyruvate pocket. Phosphoenolpyruvate-binding residues include glycine 97 and arginine 125. Residues serine 170, serine 171, glutamine 172, aspartate 323, and lysine 350 each contribute to the 3-phosphoshikimate site. A phosphoenolpyruvate-binding site is contributed by glutamine 172. The active-site Proton acceptor is aspartate 323. Phosphoenolpyruvate-binding residues include arginine 354 and arginine 399.

Belongs to the EPSP synthase family. In terms of assembly, monomer.

The protein localises to the cytoplasm. It catalyses the reaction 3-phosphoshikimate + phosphoenolpyruvate = 5-O-(1-carboxyvinyl)-3-phosphoshikimate + phosphate. Its pathway is metabolic intermediate biosynthesis; chorismate biosynthesis; chorismate from D-erythrose 4-phosphate and phosphoenolpyruvate: step 6/7. Functionally, catalyzes the transfer of the enolpyruvyl moiety of phosphoenolpyruvate (PEP) to the 5-hydroxyl of shikimate-3-phosphate (S3P) to produce enolpyruvyl shikimate-3-phosphate and inorganic phosphate. In Bartonella tribocorum (strain CIP 105476 / IBS 506), this protein is 3-phosphoshikimate 1-carboxyvinyltransferase.